The sequence spans 579 residues: uncharacterized protein (579 aa).

The protein belongs to the UbiD family.

This is an uncharacterized protein from Chlamydia muridarum (strain MoPn / Nigg).